Reading from the N-terminus, the 213-residue chain is Na(+)-translocating NADH-quinone reductase subunit D (213 aa).

The next 6 helical transmembrane spans lie at 21–41 (PLIA…VKTA), 42–62 (ITMG…VSLL), 77–97 (IIIS…FFNI), 101–121 (LSVF…AESL), 131–151 (FLDG…VSII), and 183–203 (FGLM…IWVV).

Belongs to the NqrDE/RnfAE family. As to quaternary structure, composed of six subunits; NqrA, NqrB, NqrC, NqrD, NqrE and NqrF.

It localises to the cell inner membrane. It carries out the reaction a ubiquinone + n Na(+)(in) + NADH + H(+) = a ubiquinol + n Na(+)(out) + NAD(+). In terms of biological role, NQR complex catalyzes the reduction of ubiquinone-1 to ubiquinol by two successive reactions, coupled with the transport of Na(+) ions from the cytoplasm to the periplasm. NqrA to NqrE are probably involved in the second step, the conversion of ubisemiquinone to ubiquinol. This is Na(+)-translocating NADH-quinone reductase subunit D from Chlamydia felis (strain Fe/C-56) (Chlamydophila felis).